The following is a 78-amino-acid chain: UPF0335 protein RP113 (78 aa).

The protein belongs to the UPF0335 family.

The chain is UPF0335 protein RP113 from Rickettsia prowazekii (strain Madrid E).